The chain runs to 320 residues: MIRRIGVLTSGGDAPGMNAAIRGVVRAALTEGLEVYGIYDGYQGLYEDRMEQLDRYSVSDVINRGGTFLGSARFPQFRDEAVRQVCVENMKRRGLDALVVIGGDGSYMGAKRLTEMGFPCIGLPGTIDNDVAGTDYTIGYFTALETVLEAIDRLRDTSSSHQRISIVEVMGRHCGDLTLAAAIAGGCEFIVLPEVPFSPEDLVCEIKAGIEKGKKHAIVAITELVCDVDELAKYIEKETGRETRATVLGHIQRGGSPVAYDRILASRMGAYSIELLQQGYGGRCVGIQNEKMVHHDIVDAIENMKRPFKGDWLDTAKKLF.

Glycine 12 contributes to the ATP binding site. ADP is bound by residues 22–26 and 55–60; these read RGVVR and RYSVSD. Residues 73–74 and 103–106 contribute to the ATP site; these read RF and GDGS. Aspartate 104 lines the Mg(2+) pocket. 126-128 is a binding site for substrate; sequence TID. Aspartate 128 (proton acceptor) is an active-site residue. Arginine 155 serves as a coordination point for ADP. Substrate-binding positions include arginine 163 and 170–172; that span reads MGR. Residues 186–188, lysine 212, and 214–216 each bind ADP; these read GCE and KKH. Residues glutamate 223, arginine 244, and 250–253 contribute to the substrate site; that span reads HIQR.

Belongs to the phosphofructokinase type A (PFKA) family. ATP-dependent PFK group I subfamily. Prokaryotic clade 'B1' sub-subfamily. As to quaternary structure, homotetramer. It depends on Mg(2+) as a cofactor.

The protein localises to the cytoplasm. The enzyme catalyses beta-D-fructose 6-phosphate + ATP = beta-D-fructose 1,6-bisphosphate + ADP + H(+). Its pathway is carbohydrate degradation; glycolysis; D-glyceraldehyde 3-phosphate and glycerone phosphate from D-glucose: step 3/4. Its activity is regulated as follows. Allosterically activated by ADP and other diphosphonucleosides, and allosterically inhibited by phosphoenolpyruvate. In terms of biological role, catalyzes the phosphorylation of D-fructose 6-phosphate to fructose 1,6-bisphosphate by ATP, the first committing step of glycolysis. The sequence is that of ATP-dependent 6-phosphofructokinase from Pectobacterium carotovorum subsp. carotovorum (strain PC1).